A 346-amino-acid polypeptide reads, in one-letter code: UDP-3-O-acylglucosamine N-acyltransferase (346 aa).

The active-site Proton acceptor is His240.

This sequence belongs to the transferase hexapeptide repeat family. LpxD subfamily. As to quaternary structure, homotrimer.

The catalysed reaction is a UDP-3-O-[(3R)-3-hydroxyacyl]-alpha-D-glucosamine + a (3R)-hydroxyacyl-[ACP] = a UDP-2-N,3-O-bis[(3R)-3-hydroxyacyl]-alpha-D-glucosamine + holo-[ACP] + H(+). Its pathway is bacterial outer membrane biogenesis; LPS lipid A biosynthesis. In terms of biological role, catalyzes the N-acylation of UDP-3-O-acylglucosamine using 3-hydroxyacyl-ACP as the acyl donor. Is involved in the biosynthesis of lipid A, a phosphorylated glycolipid that anchors the lipopolysaccharide to the outer membrane of the cell. The protein is UDP-3-O-acylglucosamine N-acyltransferase of Phocaeicola vulgatus (strain ATCC 8482 / DSM 1447 / JCM 5826 / CCUG 4940 / NBRC 14291 / NCTC 11154) (Bacteroides vulgatus).